Reading from the N-terminus, the 64-residue chain is DNA-directed RNA polymerase subunit Rpo10 (64 aa).

4 residues coordinate Zn(2+): Cys-7, Cys-10, Cys-45, and Cys-46.

This sequence belongs to the archaeal Rpo10/eukaryotic RPB10 RNA polymerase subunit family. In terms of assembly, part of the RNA polymerase complex. Zn(2+) serves as cofactor.

It is found in the cytoplasm. The catalysed reaction is RNA(n) + a ribonucleoside 5'-triphosphate = RNA(n+1) + diphosphate. In terms of biological role, DNA-dependent RNA polymerase (RNAP) catalyzes the transcription of DNA into RNA using the four ribonucleoside triphosphates as substrates. This Natronomonas pharaonis (strain ATCC 35678 / DSM 2160 / CIP 103997 / JCM 8858 / NBRC 14720 / NCIMB 2260 / Gabara) (Halobacterium pharaonis) protein is DNA-directed RNA polymerase subunit Rpo10.